The chain runs to 237 residues: Aspartate/glutamate leucyltransferase (237 aa).

Belongs to the R-transferase family. Bpt subfamily.

The protein localises to the cytoplasm. The catalysed reaction is N-terminal L-glutamyl-[protein] + L-leucyl-tRNA(Leu) = N-terminal L-leucyl-L-glutamyl-[protein] + tRNA(Leu) + H(+). The enzyme catalyses N-terminal L-aspartyl-[protein] + L-leucyl-tRNA(Leu) = N-terminal L-leucyl-L-aspartyl-[protein] + tRNA(Leu) + H(+). Its function is as follows. Functions in the N-end rule pathway of protein degradation where it conjugates Leu from its aminoacyl-tRNA to the N-termini of proteins containing an N-terminal aspartate or glutamate. In Shewanella amazonensis (strain ATCC BAA-1098 / SB2B), this protein is Aspartate/glutamate leucyltransferase.